Consider the following 194-residue polypeptide: Ion-translocating oxidoreductase complex subunit A (194 aa).

Helical transmembrane passes span 1-21, 48-68, 73-93, 103-123, 135-155, and 172-192; these read MVMH…FILV, CVIV…LIPF, LCTM…EIIV, LLGI…IPLM, VLYG…FSSI, and PIAL…DGLI.

This sequence belongs to the NqrDE/RnfAE family. In terms of assembly, the complex is composed of six subunits: RnfA, RnfB, RnfC, RnfD, RnfE and RnfG.

Its subcellular location is the cell inner membrane. Functionally, part of a membrane-bound complex that couples electron transfer with translocation of ions across the membrane. The sequence is that of Ion-translocating oxidoreductase complex subunit A from Buchnera aphidicola subsp. Baizongia pistaciae (strain Bp).